Consider the following 175-residue polypeptide: B9 domain-containing protein 2 (175 aa).

Residues 2–118 (AEVHVIGQII…DCPTWRPLGS (117 aa)) enclose the C2 B9-type domain.

It belongs to the B9D family. As to quaternary structure, part of the tectonic-like complex (also named B9 complex). Interacts with TUBG1.

Its subcellular location is the cytoplasm. It is found in the cytoskeleton. The protein localises to the cilium basal body. It localises to the cilium axoneme. The protein resides in the nucleus. Component of the tectonic-like complex, a complex localized at the transition zone of primary cilia and acting as a barrier that prevents diffusion of transmembrane proteins between the cilia and plasma membranes. The sequence is that of B9 domain-containing protein 2 (B9d2) from Rattus norvegicus (Rat).